The following is a 406-amino-acid chain: COP9 signalosome complex subunit 4 (406 aa).

Ala-2 is subject to N-acetylalanine. An N6-acetyllysine modification is found at Lys-25. Residues 197-366 (YRRKFIEAAQ…GIVHFETREA (170 aa)) enclose the PCI domain.

Belongs to the CSN4 family. As to quaternary structure, component of the CSN complex, composed of COPS1/GPS1, COPS2, COPS3, COPS4, COPS5, COPS6, COPS7 (COPS7A or COPS7B), COPS8 and COPS9. In the complex, it probably interacts directly with COPS1, COPS2, COPS3, COPS5, COPS6, COPS7 (COPS7A or COPS7B) and COPS8. Interacts with TOR1A; the interaction is direct and associates TOR1A and SNAPIN with the CSN complex. Interacts with STON2; controls STON2 neddylation levels. Interacts with ERCC6.

Its subcellular location is the cytoplasm. It localises to the nucleus. The protein localises to the cytoplasmic vesicle. It is found in the secretory vesicle. The protein resides in the synaptic vesicle. Functionally, component of the COP9 signalosome complex (CSN), a complex involved in various cellular and developmental processes. The CSN complex is an essential regulator of the ubiquitin (Ubl) conjugation pathway by mediating the deneddylation of the cullin subunits of SCF-type E3 ligase complexes, leading to decrease the Ubl ligase activity of SCF-type complexes such as SCF, CSA or DDB2. Also involved in the deneddylation of non-cullin subunits such as STON2. The complex is also involved in phosphorylation of p53/TP53, c-jun/JUN, IkappaBalpha/NFKBIA, ITPK1, IRF8/ICSBP and SNAPIN, possibly via its association with CK2 and PKD kinases. CSN-dependent phosphorylation of TP53 and JUN promotes and protects degradation by the Ubl system, respectively. The chain is COP9 signalosome complex subunit 4 (Cops4) from Mus musculus (Mouse).